The following is a 452-amino-acid chain: MAAAALRSGWCRCPRRCLGSGIQFLSSHNLPHGSTYQMRRPGGELPLSKSYSSGNRKGFLSGLLDNVKQELAKNKEMKESIKKFRDEARRLEESDVLQEARRKYKTIESETVRTSEVLRKKLGELTGTVKESLHEVSKSDLGRKIKEGVEEAAKTAKQSAESVSKGGEKLGRTAAFRALSQGVESVKKEIDDSVLGQTGPYRRPQRLRKRTEFAGDKFKEEKVFEPNEEALGVVLHKDSKWYQQWKDFKENNVVFNRFFEMKMKYDESDNAFIRASRALTDKVTDLLGGLFSKTEMSEVLTEILRVDPAFDKDRFLKQCENDIIPNVLEAMISGELDILKDWCYEATYSQLAHPIQQAKALGLQFHSRILDIDNVDLAMGKMMEQGPVLIITFQAQLVMVVRNPKGEVVEGDPDKVLRMLYVWALCRDQDELNPYAAWRLLDISASSTEQIL.

At threonine 128 the chain carries Phosphothreonine. 166 to 173 (GGEKLGRT) is an ATP binding site. The residue at position 180 (serine 180) is a Phosphoserine. Lysine 217 carries the post-translational modification N6-succinyllysine.

It belongs to the Tim44 family. As to quaternary structure, probable component of the PAM complex at least composed of a mitochondrial HSP70 protein, GRPEL1 or GRPEL2, TIMM44, TIMM16/PAM16 and TIMM14/DNAJC19. The complex interacts with the TIMM23 component of the TIM23 complex. Interacts with SLC25A4/ANT1 and SLC25A5/ANT2; leading to inhibit the presequence translocase TIMM23, thereby promoting stabilization of PINK1.

The protein resides in the mitochondrion inner membrane. It is found in the mitochondrion matrix. In terms of biological role, essential component of the PAM complex, a complex required for the translocation of transit peptide-containing proteins from the inner membrane into the mitochondrial matrix in an ATP-dependent manner. Recruits mitochondrial HSP70 to drive protein translocation into the matrix using ATP as an energy source. This is Mitochondrial import inner membrane translocase subunit TIM44 (TIMM44) from Homo sapiens (Human).